The primary structure comprises 316 residues: Adenine deaminase (316 aa).

3 residues coordinate Zn(2+): histidine 14, histidine 16, and histidine 194. Residue glutamate 197 is the Proton donor of the active site. Residue aspartate 275 participates in Zn(2+) binding. Aspartate 276 contributes to the substrate binding site.

This sequence belongs to the metallo-dependent hydrolases superfamily. Adenosine and AMP deaminases family. Adenine deaminase type 2 subfamily. Zn(2+) is required as a cofactor.

It catalyses the reaction adenine + H2O + H(+) = hypoxanthine + NH4(+). Its function is as follows. Catalyzes the hydrolytic deamination of adenine to hypoxanthine. Plays an important role in the purine salvage pathway and in nitrogen catabolism. This Pseudomonas aeruginosa (strain UCBPP-PA14) protein is Adenine deaminase.